Consider the following 498-residue polypeptide: Neuronal acetylcholine receptor subunit beta-4 (498 aa).

Positions Met1–Cys21 are cleaved as a signal peptide. At Arg22 to Leu239 the chain is on the extracellular side. N-linked (GlcNAc...) asparagine glycosylation is found at Asn36, Asn93, Asn138, and Asn166. Cysteines 153 and 167 form a disulfide. The helical transmembrane segment at Ile240 to Tyr255 threads the bilayer. At Leu256–Gly261 the chain is on the cytoplasmic side. Residue Glu262 coordinates Na(+). Residues Glu262–Phe277 traverse the membrane as a helical segment. The Extracellular portion of the chain corresponds to Leu278–Gly296. A helical membrane pass occupies residues Lys297 to His321. Over Arg322–Val454 the chain is Cytoplasmic. The disordered stretch occupies residues Ala357–Thr377. The chain crosses the membrane as a helical span at residues Ala455–Phe478. The Extracellular portion of the chain corresponds to Leu479–Asp498.

This sequence belongs to the ligand-gated ion channel (TC 1.A.9) family. Acetylcholine receptor (TC 1.A.9.1) subfamily. Beta-4/CHRNB4 sub-subfamily. In terms of assembly, neuronal AChR is composed of two different types of subunits: alpha and beta. CHRNB4/Beta-4 subunit can be combined to CHRNA2/alpha-2, CHRNA3/alpha-3 or CHRNA4/alpha-4, CHRNA5/alpha-5 and CHRNB3/beta-3 to give rise to functional receptors. Forms stoichiometries such as (CHRNA3)2:(CHRNB4)3 or (CHRNA3:CHRNB4)2:CHRNB3. Interacts with RIC3; which is required for proper folding and assembly. Interacts with LYPD6.

It localises to the synaptic cell membrane. The protein localises to the cell membrane. The catalysed reaction is Ca(2+)(in) = Ca(2+)(out). It catalyses the reaction K(+)(in) = K(+)(out). The enzyme catalyses Na(+)(in) = Na(+)(out). With respect to regulation, activated by a myriad of ligands such as acetylcholine, cytisine, nicotine, choline and epibatidine. The heteropentamer CHRNA3:CHRNB4 activity is blocked by the alpha-conotoxin ImI and AuIB. Functionally, component of neuronal acetylcholine receptors (nAChRs) that function as pentameric, ligand-gated cation channels with high calcium permeability among other activities. nAChRs are excitatory neurotrasnmitter receptors formed by a collection of nAChR subunits known to mediate synaptic transmission in the nervous system and the neuromuscular junction. Each nAchR subunit confers differential attributes to channel properties, including activation, deactivation and desensitization kinetics, pH sensitivity, cation permeability, and binding to allosteric modulators. CHRNB4 forms heteropentameric neuronal acetylcholine receptors with CHRNA2, CHRNA3 and CHRNA4, as well as CHRNA5 and CHRNB3 as accesory subunits. CHRNA3:CHRNB4 being predominant in neurons of the autonomic ganglia, it is known as ganglionic nicotinic receptor. CHRNA3:CHRNB4 or CHRNA3:CHRNA5:CHRNB4 play also an important role in the habenulo-interpeduncular tract, modulating the mesolimbic dopamine system and affecting reward circuits and addiction. Hypothalamic CHRNA3:CHRNB4 nAChR activation by nicotine leads to activation of POMC neurons and a decrease in food intake. The sequence is that of Neuronal acetylcholine receptor subunit beta-4 from Homo sapiens (Human).